Here is a 163-residue protein sequence, read N- to C-terminus: Phosphopantetheine adenylyltransferase (163 aa).

Serine 9 lines the substrate pocket. ATP contacts are provided by residues 9–10 (SF) and histidine 17. Substrate is bound by residues lysine 41, threonine 73, and arginine 87. ATP contacts are provided by residues 88 to 90 (GLR), glutamate 98, and 123 to 129 (YSFISSG).

Belongs to the bacterial CoaD family. As to quaternary structure, homohexamer. Mg(2+) is required as a cofactor.

The protein localises to the cytoplasm. It carries out the reaction (R)-4'-phosphopantetheine + ATP + H(+) = 3'-dephospho-CoA + diphosphate. Its pathway is cofactor biosynthesis; coenzyme A biosynthesis; CoA from (R)-pantothenate: step 4/5. In terms of biological role, reversibly transfers an adenylyl group from ATP to 4'-phosphopantetheine, yielding dephospho-CoA (dPCoA) and pyrophosphate. The chain is Phosphopantetheine adenylyltransferase from Desulforudis audaxviator (strain MP104C).